The sequence spans 341 residues: N-(sulfonatooxy)alkenimidothioic acid sulfate-lyase (epithionitrile-forming) (341 aa).

The interval 1 to 24 (MAPTLQGQWIKVGQKGGTGPGPRS) is disordered. 4 Kelch repeats span residues 34–82 (KLYS…VRMV), 87–133 (KIYI…FHSM), 139–194 (HVYV…VVQG), and 203–249 (ATSI…AHAV). Residues Lys46, Arg94, Thr129, Phe130, Arg157, Gly186, Lys211, and Val244 each coordinate a (Z)-N-(sulfonatooxy)alkanimidothioate. Arg94 serves as the catalytic Proton donor. Arg157 serves as the catalytic Proton donor. Glu260, Asp264, and His268 together coordinate Fe(2+). Residue Trp303 participates in a (Z)-N-(sulfonatooxy)alkanimidothioate binding.

As to quaternary structure, homodimer. Interacts with WRKY53. The cofactor is Fe(2+). In terms of tissue distribution, expressed in epidermal cells of all above-ground organs except the anthers, in cambial cells of leaf and stem vascular bundles, and in glucosinolates rich S-cells found in stems just below the inflorescence. Absent from roots.

The protein localises to the cytoplasm. Its subcellular location is the nucleus. The enzyme catalyses a (Z)-N-(sulfonatooxy)alkenimidothioate = an epithionitrile + sulfate. The catalysed reaction is a (Z)-N-(sulfonatooxy)alkanimidothioate = a nitrile + sulfur + sulfate. It catalyses the reaction (Z)-(indol-3-yl)-N-(sulfonatooxy)methanimidothioate = (indol-3-yl)acetonitrile + sulfur + sulfate. Its activity is regulated as follows. Not dependent on the presence of Fe(2+) although supplemental Fe(2+) increases nitriles formation. Functionally, specifier protein that contributes to constitutive and herbivore-induced simple nitrile formation. Converts glucosinolates both to epithionitriles and to simple nitriles in the presence of myrosinase. Promotes the formation of epithionitriles after hydrolysis of alkenylglucosinolates containing a terminal double bond. Mediates indol-3-ylacetonitrile (IACN) production from indol-3-ylmethylglucosinolate (glucobrassicin). Triggers the production of 3,4-epithiobutylnitrile from 2-propenylisothiocyanate, product of 2-propenylglucosinolate (sinigrin) catalysis by myrosinase. Seems inactive toward benzylglucosinolate (glucotropaeolin). Acts as a negative regulator of senescence. This is N-(sulfonatooxy)alkenimidothioic acid sulfate-lyase (epithionitrile-forming) from Arabidopsis thaliana (Mouse-ear cress).